The sequence spans 199 residues: Ribosome maturation factor RimM (199 aa).

The PRC barrel domain occupies 100 to 195 (ADEWYPKDLI…YLTLDPPGGL (96 aa)).

It belongs to the RimM family. In terms of assembly, binds ribosomal protein uS19.

Its subcellular location is the cytoplasm. Functionally, an accessory protein needed during the final step in the assembly of 30S ribosomal subunit, possibly for assembly of the head region. Essential for efficient processing of 16S rRNA. May be needed both before and after RbfA during the maturation of 16S rRNA. It has affinity for free ribosomal 30S subunits but not for 70S ribosomes. This is Ribosome maturation factor RimM from Bifidobacterium longum (strain DJO10A).